The primary structure comprises 161 residues: AP-1 complex subunit sigma-1 (161 aa).

This sequence belongs to the adaptor complexes small subunit family. As to quaternary structure, adaptor protein complex 1 (AP-1) is a heterotetramer composed of two large adaptins (gamma-type subunit and beta-type subunit), a medium adaptin (mu-type subunit) and a small adaptin (sigma-type subunit). In terms of tissue distribution, expressed in seedlings, roots, stems, leaves, flowers and siliques (developing fruits and seeds).

Its subcellular location is the golgi apparatus. It is found in the cytoplasmic vesicle. The protein resides in the clathrin-coated vesicle membrane. Subunit of clathrin-associated adaptor protein complex 1 that plays a role in protein sorting at the trans-Golgi network and early endosomes (TGN/EE). The AP complexes mediate the recruitment of clathrin to membranes and the recognition of sorting signals within the cytosolic tails of transmembrane cargo molecules. In Arabidopsis thaliana (Mouse-ear cress), this protein is AP-1 complex subunit sigma-1 (AAP19-1).